Reading from the N-terminus, the 206-residue chain is Small ribosomal subunit protein uS4 (206 aa).

The S4 RNA-binding domain maps to 96 to 156 (GRLDNVVYRM…EKSKKQARIK (61 aa)).

The protein belongs to the universal ribosomal protein uS4 family. In terms of assembly, part of the 30S ribosomal subunit. Contacts protein S5. The interaction surface between S4 and S5 is involved in control of translational fidelity.

Its function is as follows. One of the primary rRNA binding proteins, it binds directly to 16S rRNA where it nucleates assembly of the body of the 30S subunit. In terms of biological role, with S5 and S12 plays an important role in translational accuracy. The protein is Small ribosomal subunit protein uS4 of Glaesserella parasuis serovar 5 (strain SH0165) (Haemophilus parasuis).